Here is a 485-residue protein sequence, read N- to C-terminus: Chromosomal replication initiator protein DnaA (485 aa).

The interval 1 to 74 (MEKSKNIWSL…ILTNNGYDNV (74 aa)) is domain I, interacts with DnaA modulators. A domain II region spans residues 74–140 (VTIVFTNQSP…EEEPKNFKNP (67 aa)). A domain III, AAA+ region region spans residues 141–357 (FLKKRYTFEN…AAVTKLKAYI (217 aa)). Gly-185, Gly-187, Lys-188, and Thr-189 together coordinate ATP. The interval 358-485 (DLDNIEIDID…TELMNKIKKN (128 aa)) is domain IV, binds dsDNA.

This sequence belongs to the DnaA family. In terms of assembly, oligomerizes as a right-handed, spiral filament on DNA at oriC.

Its subcellular location is the cytoplasm. Its function is as follows. Plays an essential role in the initiation and regulation of chromosomal replication. ATP-DnaA binds to the origin of replication (oriC) to initiate formation of the DNA replication initiation complex once per cell cycle. Binds the DnaA box (a 9 base pair repeat at the origin) and separates the double-stranded (ds)DNA. Forms a right-handed helical filament on oriC DNA; dsDNA binds to the exterior of the filament while single-stranded (ss)DNA is stabiized in the filament's interior. The ATP-DnaA-oriC complex binds and stabilizes one strand of the AT-rich DNA unwinding element (DUE), permitting loading of DNA polymerase. After initiation quickly degrades to an ADP-DnaA complex that is not apt for DNA replication. Binds acidic phospholipids. The sequence is that of Chromosomal replication initiator protein DnaA from Borreliella afzelii (strain PKo) (Borrelia afzelii).